Consider the following 1040-residue polypeptide: Multidrug resistance protein MdtB (1040 aa).

A run of 12 helical transmembrane segments spans residues 16-36 (FIMRPVATTLLMVAILLAGII), 347-367 (LMMAIALVVMIIYLFLRNIPA), 369-389 (IIPGVAVPLSLIGTFAVMVFL), 396-416 (LTLMALTIATGFVVDDAIVVI), 440-460 (IGFTIISLTFSLIAVLIPLLF), 472-492 (FAITLAVAILISAVVSLTLTP), 537-557 (WLTLSVALSTLLLSVLLWVFI), 863-883 (LGSTVWLIVAAVVAMYIVLGI), 888-908 (FIHPITILSTLPTAGVGALLA), 911-931 (IAGSELDVIAIIGIILLIGIV), 968-988 (ILMTTLAALLGALPLMLSTGV), and 998-1018 (IGMVGGLIVSQVLTLFTTPVI).

It belongs to the resistance-nodulation-cell division (RND) (TC 2.A.6) family. MdtB subfamily. In terms of assembly, part of a tripartite efflux system composed of MdtA, MdtB and MdtC. MdtB forms a heteromultimer with MdtC.

The protein localises to the cell inner membrane. In terms of biological role, the MdtABC tripartite complex confers resistance against novobiocin and deoxycholate. The polypeptide is Multidrug resistance protein MdtB (Escherichia coli (strain K12 / MC4100 / BW2952)).